A 201-amino-acid chain; its full sequence is Translation initiation factor IF-3 (201 aa).

The disordered stretch occupies residues 170–201 (TPKSASKKGHTPPKTQVEASKQANESAETEEE). A compositionally biased stretch (polar residues) spans 182 to 195 (PKTQVEASKQANES).

This sequence belongs to the IF-3 family. In terms of assembly, monomer.

The protein localises to the cytoplasm. In terms of biological role, IF-3 binds to the 30S ribosomal subunit and shifts the equilibrium between 70S ribosomes and their 50S and 30S subunits in favor of the free subunits, thus enhancing the availability of 30S subunits on which protein synthesis initiation begins. The polypeptide is Translation initiation factor IF-3 (Porphyromonas gingivalis (strain ATCC BAA-308 / W83)).